The primary structure comprises 447 residues: Oxysterols receptor LXR-alpha (447 aa).

Residues 1–88 form a disordered region; it reads MSLWLEAPVP…LRPQKRKKGP (88 aa). The transactivation AF-1; required for ligand-independent transactivation function stretch occupies residues 1-96; it reads MSLWLEAPVP…GPAPKMLGNE (96 aa). A DNA-binding region (nuclear receptor) is located at residues 95-170; the sequence is NELCSVCGDK…AGMREECVLS (76 aa). 2 NR C4-type zinc fingers span residues 98 to 118 and 134 to 158; these read CSVCGDKASGFHYNVLSCEGC and CHSGGHCPMDTYMRRKCQECRLRKC. The segment at 178–203 is disordered; that stretch reads KMKRQEEEQAQATSAPPRASSPPQVL. The span at 187 to 203 shows a compositional bias: low complexity; it reads AQATSAPPRASSPPQVL. A transactivation AF-2; required for ligand-dependent transactivation function; mediates interaction with CCAR2 region spans residues 205–447; that stretch reads QLSPEQLGMI…LLSEIWDVHE (243 aa). Positions 209 to 447 constitute an NR LBD domain; that stretch reads EQLGMIEKLV…LLSEIWDVHE (239 aa).

Belongs to the nuclear hormone receptor family. NR1 subfamily. In terms of assembly, heterodimer of NR1H3 and RXR (retinoic acid receptor). Interacts with CCAR2 (via N-terminus) in a ligand-independent manner. Interacts with SIRT1 and this interaction is inhibited by CCAR2. Post-translationally, ubiquitinated by UBR5, leading to its degradation: UBR5 specifically recognizes and binds ligand-bound NR1H3 when it is not associated with coactivators (NCOAs). In presence of NCOAs, the UBR5-degron is not accessible, preventing its ubiquitination and degradation.

It localises to the nucleus. Its subcellular location is the cytoplasm. Nuclear receptor that exhibits a ligand-dependent transcriptional activation activity. Interaction with retinoic acid receptor (RXR) shifts RXR from its role as a silent DNA-binding partner to an active ligand-binding subunit in mediating retinoid responses through target genes defined by LXRES. LXRES are DR4-type response elements characterized by direct repeats of two similar hexanuclotide half-sites spaced by four nucleotides. Plays an important role in the regulation of cholesterol homeostasis, regulating cholesterol uptake through MYLIP-dependent ubiquitination of LDLR, VLDLR and LRP8. Interplays functionally with RORA for the regulation of genes involved in liver metabolism. Induces LPCAT3-dependent phospholipid remodeling in endoplasmic reticulum (ER) membranes of hepatocytes, driving SREBF1 processing and lipogenesis. Via LPCAT3, triggers the incorporation of arachidonate into phosphatidylcholines of ER membranes, increasing membrane dynamics and enabling triacylglycerols transfer to nascent very low-density lipoprotein (VLDL) particles. Via LPCAT3 also counteracts lipid-induced ER stress response and inflammation, likely by modulating SRC kinase membrane compartmentalization and limiting the synthesis of lipid inflammatory mediators. This chain is Oxysterols receptor LXR-alpha (NR1H3), found in Bos taurus (Bovine).